The chain runs to 290 residues: Coiled-coil domain-containing protein 137 (290 aa).

Disordered regions lie at residues 1–92, 98–117, 139–181, and 269–290; these read MARP…EAQV, LEKE…FKQR, LSKN…EARA, and RQEM…HACL. The span at 20–39 shows a compositional bias: low complexity; the sequence is SGQPQGRRQQQAQGQQRSAS. The segment covering 56-79 has biased composition (basic and acidic residues); that stretch reads KNQDEQEIPFRLREIMRSRQEMKK. The stretch at 66–89 forms a coiled coil; that stretch reads RLREIMRSRQEMKKTLSNKKRKKE. Over residues 154 to 163 the composition is skewed to basic and acidic residues; it reads PKKEKSERKK. A coiled-coil region spans residues 155-192; sequence KKEKSERKKAFQKRRLEKAQRKREARAVDRLEQELLKD. Residues 164 to 178 are compositionally biased toward basic residues; it reads AFQKRRLEKAQRKRE.

It is found in the chromosome. The sequence is that of Coiled-coil domain-containing protein 137 (Ccdc137) from Mus musculus (Mouse).